We begin with the raw amino-acid sequence, 139 residues long: Large ribosomal subunit protein uL16 (139 aa).

A compositionally biased stretch (basic residues) spans 1 to 19 (MLIPRKVKHRKQHHPKRSG). A disordered region spans residues 1–22 (MLIPRKVKHRKQHHPKRSGVAK).

The protein belongs to the universal ribosomal protein uL16 family. In terms of assembly, part of the 50S ribosomal subunit.

Its function is as follows. Binds 23S rRNA and is also seen to make contacts with the A and possibly P site tRNAs. The sequence is that of Large ribosomal subunit protein uL16 from Acidothermus cellulolyticus (strain ATCC 43068 / DSM 8971 / 11B).